The chain runs to 292 residues: Poly-beta-1,6-N-acetyl-D-glucosamine N-deacetylase (292 aa).

Residues 1-28 (MKYRKFIILVLSILIILPVSTLDGHHIA) form the signal peptide. The NodB homology domain maps to 114–292 (RSVWINFDDM…WDGFHEKDET (179 aa)).

This sequence belongs to the polysaccharide deacetylase family.

The protein localises to the secreted. Its subcellular location is the cell wall. Catalyzes the N-deacetylation of poly-beta-1,6-N-acetyl-D-glucosamine (PNAG, also referred to as PIA), a biofilm adhesin polysaccharide. N-deacetylation is crucial for attachment of the polysaccharide to the bacterial cell surface; it leads to the introduction of positive charges in the otherwise neutral PIA polymer, allowing electrostatic interactions. The protein is Poly-beta-1,6-N-acetyl-D-glucosamine N-deacetylase (icaB) of Staphylococcus aureus (strain COL).